The primary structure comprises 368 residues: Ferredoxin--NADP reductase 2 (368 aa).

Asp57, Gln65, Tyr70, Val110, Phe145, Asp310, and Thr351 together coordinate FAD.

It belongs to the ferredoxin--NADP reductase type 2 family. Homodimer. FAD is required as a cofactor.

The enzyme catalyses 2 reduced [2Fe-2S]-[ferredoxin] + NADP(+) + H(+) = 2 oxidized [2Fe-2S]-[ferredoxin] + NADPH. The polypeptide is Ferredoxin--NADP reductase 2 (Cupriavidus pinatubonensis (strain JMP 134 / LMG 1197) (Cupriavidus necator (strain JMP 134))).